The sequence spans 193 residues: dTTP/UTP pyrophosphatase (193 aa).

Residue Asp-77 is the Proton acceptor of the active site.

Belongs to the Maf family. YhdE subfamily. The cofactor is a divalent metal cation.

The protein localises to the cytoplasm. It catalyses the reaction dTTP + H2O = dTMP + diphosphate + H(+). The catalysed reaction is UTP + H2O = UMP + diphosphate + H(+). Functionally, nucleoside triphosphate pyrophosphatase that hydrolyzes dTTP and UTP. May have a dual role in cell division arrest and in preventing the incorporation of modified nucleotides into cellular nucleic acids. The polypeptide is dTTP/UTP pyrophosphatase (Parabacteroides distasonis (strain ATCC 8503 / DSM 20701 / CIP 104284 / JCM 5825 / NCTC 11152)).